A 776-amino-acid chain; its full sequence is ADP-ribosylation factor GTPase-activating protein AGD2 (776 aa).

The BAR domain occupies 2–226; that stretch reads AGFINLEDSP…IHQVLTYAQQ (225 aa). The tract at residues 248–267 is disordered; that stretch reads QSELDSQQASAKADPSDVGG. Positions 290–421 constitute a PH domain; it reads EVTKQGYLLK…WVNKITAAIT (132 aa). Positions 467–604 constitute an Arf-GAP domain; it reads DDVLTILREI…ALVVKDEREA (138 aa). A C4-type zinc finger spans residues 482-505; sequence CAECNAPDPDWASLNLGVLMCIEC. ANK repeat units lie at residues 683–712 and 716–745; these read QGCS…DINM and HGRT…RPSI.

Expressed in roots, hypocotyls, cotyledons, leaf and shoot apical meristems and siliques.

Probable GTPase-activating protein. This Arabidopsis thaliana (Mouse-ear cress) protein is ADP-ribosylation factor GTPase-activating protein AGD2 (AGD2).